The following is an 89-amino-acid chain: Small ribosomal subunit protein uS15 (89 aa).

The span at 1–10 (MAVTTDQKSQ) shows a compositional bias: polar residues. Positions 1–22 (MAVTTDQKSQVMRDYQRAAGDT) are disordered.

This sequence belongs to the universal ribosomal protein uS15 family. Part of the 30S ribosomal subunit. Forms a bridge to the 50S subunit in the 70S ribosome, contacting the 23S rRNA.

Its function is as follows. One of the primary rRNA binding proteins, it binds directly to 16S rRNA where it helps nucleate assembly of the platform of the 30S subunit by binding and bridging several RNA helices of the 16S rRNA. In terms of biological role, forms an intersubunit bridge (bridge B4) with the 23S rRNA of the 50S subunit in the ribosome. This chain is Small ribosomal subunit protein uS15, found in Nitrosomonas europaea (strain ATCC 19718 / CIP 103999 / KCTC 2705 / NBRC 14298).